The sequence spans 29 residues: U1-pseudomyrmecitoxin-Pt1 subunit SS2 (29 aa).

The protein belongs to the myrmexin family. In terms of assembly, heterodimer composed of subunit SS2 and subunit LS1 (U1-PSDTX-Pt1e), and heterodimer composed of subunit SS2 and LS2 (U1-PSDTX-Pt1c); disulfide-linked. In terms of tissue distribution, expressed by the venom gland.

It is found in the secreted. Its function is as follows. This heterodimer may have anti-inflammatory properties, since the myrmexin complex (composed of 6 SS-LS heterodimers) inhibits carrageenin-induced edema in a dose-dependent manner (after subcutaneous injection into rats). In Pseudomyrmex triplarinus (Ant), this protein is U1-pseudomyrmecitoxin-Pt1 subunit SS2.